The primary structure comprises 259 residues: 5'-nucleotidase SurE (259 aa).

A divalent metal cation contacts are provided by Asp-8, Asp-9, Ser-39, and Asn-98.

This sequence belongs to the SurE nucleotidase family. A divalent metal cation is required as a cofactor.

It is found in the cytoplasm. It catalyses the reaction a ribonucleoside 5'-phosphate + H2O = a ribonucleoside + phosphate. In terms of biological role, nucleotidase that shows phosphatase activity on nucleoside 5'-monophosphates. This Fervidobacterium nodosum (strain ATCC 35602 / DSM 5306 / Rt17-B1) protein is 5'-nucleotidase SurE.